The primary structure comprises 209 residues: uncharacterized protein (209 aa).

The next 4 helical transmembrane spans lie at 21 to 41, 81 to 101, 107 to 127, and 159 to 179; these read LAYL…VFGL, ILGL…RIAA, VLVN…LYVF, and AAGA…LLFF.

Its subcellular location is the cell membrane. This is an uncharacterized protein from Bacillus subtilis (strain 168).